Consider the following 632-residue polypeptide: tRNA uridine 5-carboxymethylaminomethyl modification enzyme MnmG (632 aa).

FAD contacts are provided by residues 15 to 20 (GAGHAG), valine 127, and serine 182. 276-290 (GARYCPSIEDKIVRF) contributes to the NAD(+) binding site. Glutamine 373 is an FAD binding site.

It belongs to the MnmG family. In terms of assembly, homodimer. Heterotetramer of two MnmE and two MnmG subunits. Requires FAD as cofactor.

Its subcellular location is the cytoplasm. Its function is as follows. NAD-binding protein involved in the addition of a carboxymethylaminomethyl (cmnm) group at the wobble position (U34) of certain tRNAs, forming tRNA-cmnm(5)s(2)U34. This Enterococcus faecalis (strain ATCC 700802 / V583) protein is tRNA uridine 5-carboxymethylaminomethyl modification enzyme MnmG.